The primary structure comprises 208 residues: Uridine kinase (208 aa).

12 to 19 (GGSGGGKT) contacts ATP.

This sequence belongs to the uridine kinase family.

It localises to the cytoplasm. It carries out the reaction uridine + ATP = UMP + ADP + H(+). It catalyses the reaction cytidine + ATP = CMP + ADP + H(+). Its pathway is pyrimidine metabolism; CTP biosynthesis via salvage pathway; CTP from cytidine: step 1/3. It participates in pyrimidine metabolism; UMP biosynthesis via salvage pathway; UMP from uridine: step 1/1. The chain is Uridine kinase from Streptococcus pyogenes serotype M18 (strain MGAS8232).